Reading from the N-terminus, the 576-residue chain is Trehalase (576 aa).

The signal sequence occupies residues 1-20; it reads MTWELHLLLLLGLGLRSQEA. N75 carries N-linked (GlcNAc...) asparagine glycosylation. Substrate is bound by residues R165, 172–173, N209, and 218–220; these read WD and RSQ. N258 carries N-linked (GlcNAc...) asparagine glycosylation. Substrate contacts are provided by residues 283 to 285 and G316; that span reads RPE. Catalysis depends on D318, which acts as the Proton donor/acceptor. A glycan (N-linked (GlcNAc...) asparagine) is linked at N366. The Proton donor/acceptor role is filled by E511. A substrate-binding site is contributed by E526. Residue S553 is the site of GPI-anchor amidated serine attachment. Positions 554 to 576 are cleaved as a propeptide — removed in mature form; sequence GTQLASLGPHCLVAALLLSLLLQ.

It belongs to the glycosyl hydrolase 37 family. In terms of assembly, homodimer; disulfide-linked.

The protein resides in the cell membrane. The enzyme catalyses alpha,alpha-trehalose + H2O = alpha-D-glucose + beta-D-glucose. Functionally, intestinal trehalase is probably involved in the hydrolysis of ingested trehalose. In Mus musculus (Mouse), this protein is Trehalase.